The sequence spans 93 residues: Aspartyl/glutamyl-tRNA(Asn/Gln) amidotransferase subunit C (93 aa).

This sequence belongs to the GatC family. As to quaternary structure, heterotrimer of A, B and C subunits.

The catalysed reaction is L-glutamyl-tRNA(Gln) + L-glutamine + ATP + H2O = L-glutaminyl-tRNA(Gln) + L-glutamate + ADP + phosphate + H(+). The enzyme catalyses L-aspartyl-tRNA(Asn) + L-glutamine + ATP + H2O = L-asparaginyl-tRNA(Asn) + L-glutamate + ADP + phosphate + 2 H(+). Allows the formation of correctly charged Asn-tRNA(Asn) or Gln-tRNA(Gln) through the transamidation of misacylated Asp-tRNA(Asn) or Glu-tRNA(Gln) in organisms which lack either or both of asparaginyl-tRNA or glutaminyl-tRNA synthetases. The reaction takes place in the presence of glutamine and ATP through an activated phospho-Asp-tRNA(Asn) or phospho-Glu-tRNA(Gln). The protein is Aspartyl/glutamyl-tRNA(Asn/Gln) amidotransferase subunit C of Rubrobacter xylanophilus (strain DSM 9941 / JCM 11954 / NBRC 16129 / PRD-1).